The chain runs to 158 residues: Transcription elongation factor GreA (158 aa).

It belongs to the GreA/GreB family.

Its function is as follows. Necessary for efficient RNA polymerase transcription elongation past template-encoded arresting sites. The arresting sites in DNA have the property of trapping a certain fraction of elongating RNA polymerases that pass through, resulting in locked ternary complexes. Cleavage of the nascent transcript by cleavage factors such as GreA or GreB allows the resumption of elongation from the new 3'terminus. GreA releases sequences of 2 to 3 nucleotides. This Psychrobacter sp. (strain PRwf-1) protein is Transcription elongation factor GreA.